Reading from the N-terminus, the 207-residue chain is Small ribosomal subunit protein uS4c (207 aa).

Positions 92–156 (MRLDNILFRL…YQSIITKRIE (65 aa)) constitute an S4 RNA-binding domain.

It belongs to the universal ribosomal protein uS4 family. Part of the 30S ribosomal subunit. Contacts protein S5. The interaction surface between S4 and S5 is involved in control of translational fidelity.

Its subcellular location is the plastid. The protein localises to the chloroplast. One of the primary rRNA binding proteins, it binds directly to 16S rRNA where it nucleates assembly of the body of the 30S subunit. In terms of biological role, with S5 and S12 plays an important role in translational accuracy. This is Small ribosomal subunit protein uS4c (rps4) from Equisetum pratense (Meadow horsetail).